The following is a 351-amino-acid chain: Phospho-N-acetylmuramoyl-pentapeptide-transferase (351 aa).

10 helical membrane-spanning segments follow: residues 22-42 (ILAFFLSFFITIFIMPKFISW), 65-85 (TPTMGGLIYITSAVISILITT), 87-107 (FNKYVLLTLLLLVYFTYLGFI), 128-148 (FLLQWVGALVISYLLIKVGFD), 158-178 (YPIFDMGYYAVIFWAFIIVAM), 190-210 (GLATVPSIFSLFTLGILLYIV), 225-245 (LGVGELTIIVFALIGALLGFL), 254-274 (VFMGDSGSLPLGAVIGFLAIV), 279-299 (LLLIFIAFVFIMETVSVILQV), and 328-348 (KITIRFWIMALITNLIAILSI).

It belongs to the glycosyltransferase 4 family. MraY subfamily. Mg(2+) is required as a cofactor.

It is found in the cell inner membrane. The enzyme catalyses UDP-N-acetyl-alpha-D-muramoyl-L-alanyl-gamma-D-glutamyl-meso-2,6-diaminopimeloyl-D-alanyl-D-alanine + di-trans,octa-cis-undecaprenyl phosphate = di-trans,octa-cis-undecaprenyl diphospho-N-acetyl-alpha-D-muramoyl-L-alanyl-D-glutamyl-meso-2,6-diaminopimeloyl-D-alanyl-D-alanine + UMP. It functions in the pathway cell wall biogenesis; peptidoglycan biosynthesis. Catalyzes the initial step of the lipid cycle reactions in the biosynthesis of the cell wall peptidoglycan: transfers peptidoglycan precursor phospho-MurNAc-pentapeptide from UDP-MurNAc-pentapeptide onto the lipid carrier undecaprenyl phosphate, yielding undecaprenyl-pyrophosphoryl-MurNAc-pentapeptide, known as lipid I. In Nautilia profundicola (strain ATCC BAA-1463 / DSM 18972 / AmH), this protein is Phospho-N-acetylmuramoyl-pentapeptide-transferase.